Reading from the N-terminus, the 198-residue chain is Recombination protein RecR (198 aa).

The segment at 57 to 72 (CAMCNTFTESAVCETC) adopts a C4-type zinc-finger fold. In terms of domain architecture, Toprim spans 80 to 175 (ALLCVVETPG…KVSRLARGVP (96 aa)).

The protein belongs to the RecR family.

Functionally, may play a role in DNA repair. It seems to be involved in an RecBC-independent recombinational process of DNA repair. It may act with RecF and RecO. The protein is Recombination protein RecR of Herminiimonas arsenicoxydans.